Consider the following 141-residue polypeptide: Large ribosomal subunit protein uL11 (141 aa).

This sequence belongs to the universal ribosomal protein uL11 family. As to quaternary structure, part of the ribosomal stalk of the 50S ribosomal subunit. Interacts with L10 and the large rRNA to form the base of the stalk. L10 forms an elongated spine to which L12 dimers bind in a sequential fashion forming a multimeric L10(L12)X complex. One or more lysine residues are methylated.

Functionally, forms part of the ribosomal stalk which helps the ribosome interact with GTP-bound translation factors. The chain is Large ribosomal subunit protein uL11 from Chlorobium chlorochromatii (strain CaD3).